A 283-amino-acid polypeptide reads, in one-letter code: Putative S-adenosyl-L-methionine-dependent methyltransferase SCO7813 (283 aa).

S-adenosyl-L-methionine contacts are provided by residues D121 and 150–151 (DL). Positions 264–283 (MSTLPQHEDGPGGLISAVRR) are disordered.

This sequence belongs to the UPF0677 family.

In terms of biological role, exhibits S-adenosyl-L-methionine-dependent methyltransferase activity. The chain is Putative S-adenosyl-L-methionine-dependent methyltransferase SCO7813 from Streptomyces coelicolor (strain ATCC BAA-471 / A3(2) / M145).